The chain runs to 199 residues: Dephospho-CoA kinase (199 aa).

The region spanning 3–199 (KVGLTGGICS…DLLEFFTLYQ (197 aa)) is the DPCK domain. 11–16 (CSGKST) lines the ATP pocket.

It belongs to the CoaE family.

It is found in the cytoplasm. It carries out the reaction 3'-dephospho-CoA + ATP = ADP + CoA + H(+). It functions in the pathway cofactor biosynthesis; coenzyme A biosynthesis; CoA from (R)-pantothenate: step 5/5. Functionally, catalyzes the phosphorylation of the 3'-hydroxyl group of dephosphocoenzyme A to form coenzyme A. This Clostridium perfringens (strain 13 / Type A) protein is Dephospho-CoA kinase.